The sequence spans 244 residues: Carboxy-S-adenosyl-L-methionine synthase (244 aa).

S-adenosyl-L-methionine-binding positions include Tyr38, 63–65 (GCS), 88–89 (DN), 116–117 (DI), Asn131, and Arg198.

It belongs to the class I-like SAM-binding methyltransferase superfamily. Cx-SAM synthase family. Homodimer.

It carries out the reaction prephenate + S-adenosyl-L-methionine = carboxy-S-adenosyl-L-methionine + 3-phenylpyruvate + H2O. In terms of biological role, catalyzes the conversion of S-adenosyl-L-methionine (SAM) to carboxy-S-adenosyl-L-methionine (Cx-SAM). This chain is Carboxy-S-adenosyl-L-methionine synthase, found in Haemophilus ducreyi (strain 35000HP / ATCC 700724).